Consider the following 811-residue polypeptide: Glycerol-3-phosphate acyltransferase (811 aa).

The HXXXXD motif motif lies at C305–I310.

Belongs to the GPAT/DAPAT family.

The protein localises to the cell inner membrane. The catalysed reaction is sn-glycerol 3-phosphate + an acyl-CoA = a 1-acyl-sn-glycero-3-phosphate + CoA. The protein operates within phospholipid metabolism; CDP-diacylglycerol biosynthesis; CDP-diacylglycerol from sn-glycerol 3-phosphate: step 1/3. In Histophilus somni (strain 129Pt) (Haemophilus somnus), this protein is Glycerol-3-phosphate acyltransferase.